A 477-amino-acid chain; its full sequence is Ribulose bisphosphate carboxylase large chain (477 aa).

The propeptide occupies 1–2 (MS). An N-acetylproline modification is found at P3. An N6,N6,N6-trimethyllysine modification is found at K14. The substrate site is built by N123 and T173. K175 functions as the Proton acceptor in the catalytic mechanism. Residue K177 coordinates substrate. Mg(2+) contacts are provided by K201, D203, and E204. K201 bears the N6-carboxylysine mark. H294 serves as the catalytic Proton acceptor. Substrate-binding residues include R295, H327, and S379.

This sequence belongs to the RuBisCO large chain family. Type I subfamily. In terms of assembly, heterohexadecamer of 8 large chains and 8 small chains; disulfide-linked. The disulfide link is formed within the large subunit homodimers. It depends on Mg(2+) as a cofactor. In terms of processing, the disulfide bond which can form in the large chain dimeric partners within the hexadecamer appears to be associated with oxidative stress and protein turnover.

It is found in the plastid. Its subcellular location is the chloroplast. It catalyses the reaction 2 (2R)-3-phosphoglycerate + 2 H(+) = D-ribulose 1,5-bisphosphate + CO2 + H2O. It carries out the reaction D-ribulose 1,5-bisphosphate + O2 = 2-phosphoglycolate + (2R)-3-phosphoglycerate + 2 H(+). Functionally, ruBisCO catalyzes two reactions: the carboxylation of D-ribulose 1,5-bisphosphate, the primary event in carbon dioxide fixation, as well as the oxidative fragmentation of the pentose substrate in the photorespiration process. Both reactions occur simultaneously and in competition at the same active site. This Solanum tuberosum (Potato) protein is Ribulose bisphosphate carboxylase large chain (rbcL).